Reading from the N-terminus, the 299-residue chain is MITFLYIFFSILILVLFVLGNFANGFIALVNFIDWVKRKKISSADQILTALAVSRIGLLWALLLNWYLTVLNPAFYSVELRITSYNAWVVTNHFSMWLAASLSIFYLLKIANFSNLIFLHLKRRVRSVILVILLGTLIFLVCHLLVANMDESMWAEEYEGNMTGKMKLRNTVHLSYLTVTTLWSFIPFTLSLISFLMLICSLCKHLKKMQLHGEGSQDLSTKVHIKALQTLISFLLLCAIFFLFLIISVWSPRRLQNDPVVMVSKAVGNIYLAFDSFILIWRTKKLKHTFLLILCQIRC.

Position 1 (methionine 1) is a topological domain, extracellular. The helical transmembrane segment at 2–22 (ITFLYIFFSILILVLFVLGNF) threads the bilayer. At 23-55 (ANGFIALVNFIDWVKRKKISSADQILTALAVSR) the chain is on the cytoplasmic side. The helical transmembrane segment at 56 to 76 (IGLLWALLLNWYLTVLNPAFY) threads the bilayer. Residues 77–87 (SVELRITSYNA) are Extracellular-facing. Residues 88–108 (WVVTNHFSMWLAASLSIFYLL) traverse the membrane as a helical segment. The Cytoplasmic segment spans residues 109–126 (KIANFSNLIFLHLKRRVR). Residues 127–147 (SVILVILLGTLIFLVCHLLVA) form a helical membrane-spanning segment. Over 148–181 (NMDESMWAEEYEGNMTGKMKLRNTVHLSYLTVTT) the chain is Extracellular. Asparagine 161 carries N-linked (GlcNAc...) asparagine glycosylation. The chain crosses the membrane as a helical span at residues 182-202 (LWSFIPFTLSLISFLMLICSL). The Cytoplasmic portion of the chain corresponds to 203–229 (CKHLKKMQLHGEGSQDLSTKVHIKALQ). A helical membrane pass occupies residues 230-250 (TLISFLLLCAIFFLFLIISVW). The Extracellular portion of the chain corresponds to 251–259 (SPRRLQNDP). The helical transmembrane segment at 260–280 (VVMVSKAVGNIYLAFDSFILI) threads the bilayer. Residues 281–299 (WRTKKLKHTFLLILCQIRC) lie on the Cytoplasmic side of the membrane.

It belongs to the G-protein coupled receptor T2R family.

The protein localises to the membrane. Receptor that may play a role in the perception of bitterness and is gustducin-linked. May play a role in sensing the chemical composition of the gastrointestinal content. The activity of this receptor may stimulate alpha gustducin, mediate PLC-beta-2 activation and lead to the gating of TRPM5. The protein is Taste receptor type 2 member 50 (TAS2R50) of Gorilla gorilla gorilla (Western lowland gorilla).